The following is a 64-amino-acid chain: MAKHLVDIDEQALNMARTELGTTTIKDTVNAALRQATSQRVQRVAAALDTLAAAPPEDRAEAWR.

Its function is as follows. Possibly the antitoxin component of a type II toxin-antitoxin (TA) system. Its cognate toxin is VapC51. The polypeptide is Putative antitoxin VapB51 (Mycobacterium tuberculosis (strain ATCC 25618 / H37Rv)).